A 1507-amino-acid polypeptide reads, in one-letter code: DDB1- and CUL4-associated factor 1 (1507 aa).

A protein kinase-like region spans residues 141-500 (QPLRTYSTGL…STLEILNLED (360 aa)). Residues Ser202 and Ser255 each carry the phosphoserine modification. Residues 242–288 (HLDSGHKTSSRVNSTTKPEDGGLKKNKSAKQGDRENFRKAKQKLGFS) form a disordered region. A Chromo domain is found at 562-593 (SYTHEQIVEMMEFLIEYGPAQLYWEPAEVFLK). Residue Lys701 is modified to N6-acetyllysine. Ser828 carries the phosphoserine modification. The 33-residue stretch at 846 to 878 (PEKELLLLIRNHLISKGLGETATVLTKEADLPM) folds into the LisH domain. Thr888 carries the phosphothreonine modification. Residues Ser895 and Ser898 each carry the phosphoserine modification. A disordered region spans residues 917 to 947 (AAVGASAPSAPTAHPQPRPPQGPLALPGPSY). Phosphoserine occurs at positions 979 and 1000. 5 WD repeats span residues 1091–1130 (EDESGFTCCAFSARERFLMLGTCTGQLKLYNVFSGQEEAS), 1133–1174 (CHNS…DMKH), 1176–1213 (FTEDHYVEFSKHSQDRVIGTKGDIAHIYDIQTGNKLLT), 1215–1247 (FNPDLANNYKRNCATFNPTDDLVLNDGVLWDVR), and 1248–1290 (SAQA…LLHT). Residues 1091–1290 (EDESGFTCCA…DLRTFHLLHT (200 aa)) form a WD repeat-like region region. Short sequence motifs (DWD box) lie at residues 1242-1249 (VLWDVRSA) and 1278-1285 (EIWDLRTF). Position 1328 is a phosphoserine (Ser1328). Residues 1393 to 1507 (RLAEDEDEEE…EDDIILSLNE (115 aa)) are disordered. Composition is skewed to acidic residues over residues 1396 to 1483 (EDED…EEVE) and 1490 to 1501 (DSSDNSDLEDDI). The tract at residues 1418–1507 (DDDTDDLDEL…EDDIILSLNE (90 aa)) is interaction with NF2.

It belongs to the VPRBP/DCAF1 family. As to quaternary structure, component of the DCX (DDB1-CUL4-X-box) E3 ubiquitin-protein ligase complex, named CUL4A-RBX1-DDB1-DCAF1/VPRBP complex. Interacts with DDB1; the interaction is direct. Also forms a ternary complex with DDA1 and DDB1. Interacts with NF2 (via FERM domain). Component of the EDVP complex, a E3 ligase complex containing DYRK2, EDD/UBR5, DDB1 and DCAF1. Interacts with DYRK2; the interaction is direct. Interacts with RAG1; the interaction is direct. Interacts with LLGL1 and LLGL2. Interacts with histone H3. Interacts with ESR1 and LATS1; probably recruited by LATS1 to promote ESR1 ubiquitination and ubiquitin-mediated proteasomal degradation. Directly interacts with TET1, TET2 and TET3 (via C-terminus). Interacts with CEP78; promoting DCAF1 localization to centrosomes. (Microbial infection) Interacts with HIV-1 virus Vpr protein; the interaction is direct. In terms of assembly, (Microbial infection) Interacts with HIV-2 virus Vpx protein; the interaction is direct and the complex recruits SAMHD1 to promote its ubiquitin-dependent proteasomal degradation. As to quaternary structure, (Microbial infection) Interacts (via C-terminus) with human cytomegalovirus protein UL35; this interaction induces the accumulation of cells in the G2 phase of the cell cycle. As to expression, ubiquitously expressed.

The protein resides in the cytoplasm. Its subcellular location is the nucleus. The protein localises to the cytoskeleton. It is found in the microtubule organizing center. It localises to the centrosome. The enzyme catalyses L-seryl-[protein] + ATP = O-phospho-L-seryl-[protein] + ADP + H(+). The catalysed reaction is L-threonyl-[protein] + ATP = O-phospho-L-threonyl-[protein] + ADP + H(+). It functions in the pathway protein modification; protein ubiquitination. Functionally, acts both as a substrate recognition component of E3 ubiquitin-protein ligase complexes and as an atypical serine/threonine-protein kinase, playing key roles in various processes such as cell cycle, telomerase regulation and histone modification. Probable substrate-specific adapter of a DCX (DDB1-CUL4-X-box) E3 ubiquitin-protein ligase complex, named CUL4A-RBX1-DDB1-DCAF1/VPRBP complex, which mediates ubiquitination and proteasome-dependent degradation of proteins such as NF2. Involved in the turnover of methylated proteins: recognizes and binds methylated proteins via its chromo domain, leading to ubiquitination of target proteins by the RBX1-DDB1-DCAF1/VPRBP complex. The CUL4A-RBX1-DDB1-DCAF1/VPRBP complex is also involved in B-cell development: DCAF1 is recruited by RAG1 to ubiquitinate proteins, leading to limit error-prone repair during V(D)J recombination. Also part of the EDVP complex, an E3 ligase complex that mediates ubiquitination of proteins such as TERT, leading to TERT degradation and telomerase inhibition. The EDVP complex also mediates ubiquitination and degradation of CCP110. Also acts as an atypical serine/threonine-protein kinase that specifically mediates phosphorylation of 'Thr-120' of histone H2A (H2AT120ph) in a nucleosomal context, thereby repressing transcription. H2AT120ph is present in the regulatory region of many tumor suppresor genes, down-regulates their transcription and is present at high level in a number of tumors. Involved in JNK-mediated apoptosis during cell competition process via its interaction with LLGL1 and LLGL2. By acting on TET dioxygenses, essential for oocyte maintenance at the primordial follicle stage, hence essential for female fertility. (Microbial infection) In case of infection by HIV-1 virus, it is recruited by HIV-1 Vpr in order to hijack the CUL4A-RBX1-DDB1-DCAF1/VPRBP function leading to arrest the cell cycle in G2 phase, and also to protect the viral protein from proteasomal degradation by another E3 ubiquitin ligase. The HIV-1 Vpr protein hijacks the CUL4A-RBX1-DDB1-DCAF1/VPRBP complex to promote ubiquitination and degradation of proteins such as TERT and ZIP/ZGPAT. In terms of biological role, (Microbial infection) In case of infection by HIV-2 virus, it is recruited by HIV-2 Vpx in order to hijack the CUL4A-RBX1-DDB1-DCAF1/VPRBP function leading to enhanced efficiency of macrophage infection and promotion of the replication of cognate primate lentiviruses in cells of monocyte/macrophage lineage. This is DDB1- and CUL4-associated factor 1 from Homo sapiens (Human).